Here is a 119-residue protein sequence, read N- to C-terminus: MKALSPVRGCYEAVCCLSERSLAIARGRGKSPAAEEPLSLLDDMNHCYSRLRELVPGVPRGTQLSQVEILQRVIDYILDLQVVLAEPAPGPPDGPHLPIQTAELAPELVISNDQRSFCH.

The 53-residue stretch at 28 to 80 (RGKSPAAEEPLSLLDDMNHCYSRLRELVPGVPRGTQLSQVEILQRVIDYILDL) folds into the bHLH domain.

Homodimer, and heterodimer with other HLH proteins. Interacts with COPS5 and COPS7A. Interacts with IFI204. Interacts with GATA4 and NKX2-5. Interacts with ANKRD2; both proteins cooperate in myoblast differentiation. Interacts with CLOCK and BMAL1.

It is found in the nucleus. In terms of biological role, transcriptional regulator (lacking a basic DNA binding domain) which negatively regulates the basic helix-loop-helix (bHLH) transcription factors by forming heterodimers and inhibiting their DNA binding and transcriptional activity. Implicated in regulating a variety of cellular processes, including cellular growth, senescence, differentiation, apoptosis, angiogenesis, and neoplastic transformation. Involved in myogenesis by inhibiting skeletal muscle and cardiac myocyte differentiation and promoting muscle precursor cells proliferation. Inhibits the binding of E2A-containing protein complexes to muscle creatine kinase E-box enhancer. Regulates the circadian clock by repressing the transcriptional activator activity of the CLOCK-BMAL1 heterodimer. This is DNA-binding protein inhibitor ID-3 (ID3) from Bos taurus (Bovine).